The primary structure comprises 317 residues: 2-keto-3-deoxygluconate permease 1 (317 aa).

Transmembrane regions (helical) follow at residues 10–30, 47–67, 82–102, 106–126, 134–154, 159–179, 195–215, 217–237, 248–268, and 279–299; these read VPGG…TFAP, AAPL…VKAA, LLVA…EGIF, GVAI…ALVG, VGAI…IALG, ANIP…GMIL, PLLI…EMLL, GGLA…FFNI, IAGA…LAIA, and AAAA…TPVL.

It belongs to the KdgT transporter family.

Its subcellular location is the cell inner membrane. It catalyses the reaction 2-dehydro-3-deoxy-D-gluconate(in) + H(+)(in) = 2-dehydro-3-deoxy-D-gluconate(out) + H(+)(out). Functionally, catalyzes the proton-dependent uptake of 2-keto-3-deoxygluconate (KDG) into the cell. The protein is 2-keto-3-deoxygluconate permease 1 of Salmonella typhi.